A 570-amino-acid polypeptide reads, in one-letter code: Proline--tRNA ligase (570 aa).

The protein belongs to the class-II aminoacyl-tRNA synthetase family. ProS type 1 subfamily. In terms of assembly, homodimer.

Its subcellular location is the cytoplasm. The enzyme catalyses tRNA(Pro) + L-proline + ATP = L-prolyl-tRNA(Pro) + AMP + diphosphate. Functionally, catalyzes the attachment of proline to tRNA(Pro) in a two-step reaction: proline is first activated by ATP to form Pro-AMP and then transferred to the acceptor end of tRNA(Pro). As ProRS can inadvertently accommodate and process non-cognate amino acids such as alanine and cysteine, to avoid such errors it has two additional distinct editing activities against alanine. One activity is designated as 'pretransfer' editing and involves the tRNA(Pro)-independent hydrolysis of activated Ala-AMP. The other activity is designated 'posttransfer' editing and involves deacylation of mischarged Ala-tRNA(Pro). The misacylated Cys-tRNA(Pro) is not edited by ProRS. This chain is Proline--tRNA ligase, found in Shewanella sp. (strain MR-7).